Here is a 390-residue protein sequence, read N- to C-terminus: Succinate--CoA ligase [ADP-forming] subunit beta (390 aa).

Positions 9-245 (KHLLKKYNIP…TTQEDEHETM (237 aa)) constitute an ATP-grasp domain. Residues Lys46, 53-55 (GRG), Glu99, Ser102, and Glu107 contribute to the ATP site. Residues Asn200 and Asp214 each coordinate Mg(2+). Residues Asn265 and 322–324 (GIV) each bind substrate.

This sequence belongs to the succinate/malate CoA ligase beta subunit family. In terms of assembly, heterotetramer of two alpha and two beta subunits. Mg(2+) serves as cofactor.

The enzyme catalyses succinate + ATP + CoA = succinyl-CoA + ADP + phosphate. It catalyses the reaction GTP + succinate + CoA = succinyl-CoA + GDP + phosphate. It functions in the pathway carbohydrate metabolism; tricarboxylic acid cycle; succinate from succinyl-CoA (ligase route): step 1/1. Its function is as follows. Succinyl-CoA synthetase functions in the citric acid cycle (TCA), coupling the hydrolysis of succinyl-CoA to the synthesis of either ATP or GTP and thus represents the only step of substrate-level phosphorylation in the TCA. The beta subunit provides nucleotide specificity of the enzyme and binds the substrate succinate, while the binding sites for coenzyme A and phosphate are found in the alpha subunit. The sequence is that of Succinate--CoA ligase [ADP-forming] subunit beta from Coxiella burnetii (strain RSA 331 / Henzerling II).